The sequence spans 415 residues: WD repeat and FYVE domain-containing protein 2 (415 aa).

WD repeat units follow at residues 71–103 (HHFMPVAPTSLYYSEETYKLLVGLINGNVYEFS), 119–148 (CHAGPISGLGFALSSELIFSCSRDKSIVWH), 202–232 (AHTNAITSLTWDGNKKVLYSGSSDHLIIMWD), and 245–284 (GHNGKVTTLCAAPAAKRLFSADEHGKLMCWDMNCKRVETP). The segment at 286–357 (WKTSDCCQKC…ICNDCNARMK (72 aa)) adopts an FYVE-type zinc-finger fold. Positions 292, 295, 319, 322, 327, 330, 349, and 352 each coordinate Zn(2+). The stretch at 373–403 (EIHTGITAMHLQETLGLLVTSGQNRVIMIWD) is one WD 5 repeat.

Plays a role in coelomocyte endocytosis. This chain is WD repeat and FYVE domain-containing protein 2 (wdfy-2), found in Caenorhabditis elegans.